Reading from the N-terminus, the 178-residue chain is Large ribosomal subunit protein uL6 (178 aa).

Belongs to the universal ribosomal protein uL6 family. As to quaternary structure, part of the 50S ribosomal subunit.

Its function is as follows. This protein binds to the 23S rRNA, and is important in its secondary structure. It is located near the subunit interface in the base of the L7/L12 stalk, and near the tRNA binding site of the peptidyltransferase center. The protein is Large ribosomal subunit protein uL6 of Staphylococcus aureus (strain Mu3 / ATCC 700698).